We begin with the raw amino-acid sequence, 173 residues long: Regulator of ribonuclease activity A (173 aa).

Belongs to the RraA family. In terms of assembly, homotrimer. Binds to both RNA-binding sites in the C-terminal region of Rne and to RhlB.

It localises to the cytoplasm. Its function is as follows. Globally modulates RNA abundance by binding to RNase E (Rne) and regulating its endonucleolytic activity. Can modulate Rne action in a substrate-dependent manner by altering the composition of the degradosome. Modulates RNA-binding and helicase activities of the degradosome. The chain is Regulator of ribonuclease activity A from Vibrio vulnificus (strain CMCP6).